The sequence spans 146 residues: Hemoglobin subunit beta (146 aa).

Residues histidine 2–histidine 146 enclose the Globin domain. 2 residues coordinate heme b: histidine 63 and histidine 92.

The protein belongs to the globin family. As to quaternary structure, heterotetramer of two alpha chains and two beta chains. Red blood cells.

In terms of biological role, involved in oxygen transport from the lung to the various peripheral tissues. The polypeptide is Hemoglobin subunit beta (HBB) (Phoenicopterus ruber (American flamingo)).